Reading from the N-terminus, the 791-residue chain is Metabotropic glutamate receptor-like protein D (791 aa).

The first 22 residues, 1–22 (MKINSFLIILILLFISIKNSNG), serve as a signal peptide directing secretion. At 23–390 (EPEKKFKLIT…TEVYQSRPIQ (368 aa)) the chain is on the extracellular side. N-linked (GlcNAc...) asparagine glycosylation is found at Asn72, Asn168, Asn279, Asn290, Asn306, and Asn349. A helical membrane pass occupies residues 391–411 (IAISSISSFFIVTVLVMMGLV). At 412–424 (VRFRKNPSIRSAS) the chain is on the cytoplasmic side. Residues 425–445 (PIFLNFILFGALIIYVGIIIW) traverse the membrane as a helical segment. Topologically, residues 446–453 (SSSINSAS) are extracellular. A helical membrane pass occupies residues 454–474 (CNAQFWLVTLGFTTLIGSLVV). Topologically, residues 475–495 (KNVRIWLIFDNPELKLVKITN) are cytoplasmic. The helical transmembrane segment at 496–516 (LQLVPWVGVCLVINIILMSIL) threads the bilayer. Over 517–550 (TSVGDLREVNAQGIDSLGKYEFMRICKMNSSGAS) the chain is Extracellular. Residue Asn545 is glycosylated (N-linked (GlcNAc...) asparagine). A helical transmembrane segment spans residues 551–571 (TLYTILAYFAALLLIGVFVSW). The Cytoplasmic portion of the chain corresponds to 572–585 (KIRIVDILEFNESK). A helical transmembrane segment spans residues 586-606 (AIANTLYAISFCLFVIVPLMI). Topologically, residues 607–615 (SPQDKQSEK) are extracellular. A helical membrane pass occupies residues 616–636 (IILCIAGLFIVTAAVLIIFVP). Residues 637-791 (KFYRVYIFGS…KNEENNDGDN (155 aa)) lie on the Cytoplasmic side of the membrane. Disordered stretches follow at residues 664-715 (TARA…SEPN) and 746-791 (IITE…DGDN). The span at 674-689 (SSGGGAGSGGATGGSG) shows a compositional bias: gly residues. The span at 749-760 (ENGQDSNNNNNN) shows a compositional bias: low complexity. Residues 752-781 (QDSNNNNNNEENKDNNIENNKISEEIKENL) are a coiled coil. Basic and acidic residues predominate over residues 761–785 (EENKDNNIENNKISEEIKENLKNEE).

This sequence in the N-terminal section; belongs to the BMP lipoprotein family. In the C-terminal section; belongs to the G-protein coupled receptor 3 family. GABA-B receptor subfamily.

It localises to the membrane. This chain is Metabotropic glutamate receptor-like protein D (grlD), found in Dictyostelium discoideum (Social amoeba).